A 780-amino-acid polypeptide reads, in one-letter code: Striatin (780 aa).

Positions 53–120 (LHFLQHEWAR…QERAKYHKLK (68 aa)) form a coiled coil. Residues 55 to 63 (FLQHEWARF) are caveolin-binding. The segment at 124–145 (ELNQGDMKPPSYDSDEGNETEV) is disordered. At Ser-137 the chain carries Phosphoserine. The interval 149 to 166 (QNSQFMWKQGRQLLRQYL) is calmodulin-binding. Phosphothreonine is present on Thr-225. Ser-227, Ser-229, Ser-245, and Ser-259 each carry phosphoserine. Disordered stretches follow at residues 290–321 (FLVASEEGDNESRSAGDGTDWEKEDQCLTPER), 334–353 (EQYKKERKGKKGVKRPNRSK), and 363–388 (DVDELPSLQPSVGSPSRPSSSRLPEQ). Positions 299 to 315 (NESRSAGDGTDWEKEDQ) are enriched in basic and acidic residues. Over residues 338 to 351 (KERKGKKGVKRPNR) the composition is skewed to basic residues. 6 WD repeats span residues 461–500 (SHFDGIRALAFHPIEPVLITASEDHTLKMWNLQKTAPAKK), 514–553 (AHKGPVLCVVMSSNGEQCYSGGTDGLIQSWSTTNPNVDPY), 567–606 (GHTDAVWGLAYSAAHQRLLSCSADGTLRLWTTTEVAPALT), 662–701 (SSSCQINRVISHPTLPISITAHEDRHIKFYDNNTGKLIHS), 704–743 (AHLEAVTSLAVDPNGLYLMSGSHDCSIRLWNLESKTCIQE), and 750–780 (KFEESIHDVAFHPSKCYIASAGADALAKVFV).

The protein belongs to the WD repeat striatin family. In terms of assembly, part of the core of STRIPAK complexes composed of PP2A catalytic and scaffolding subunits, the striatins (PP2A regulatory subunits), the striatin-associated proteins MOB4, STRIP1 and STRIP2, PDCD10 and members of the STE20 kinases, such as STK24 and STK26. Interacts with CTTNBP2; this interaction may regulate dendritic spine distribution of STRN. Activation of glutamate receptors weakens the interaction with CTTNBP2. As to expression, mainly expressed in the central nervous system. Mostly confined in dendrites, not in axons, and is most abundant in dendritic spines.

The protein resides in the cytoplasm. The protein localises to the membrane. It is found in the cell projection. It localises to the dendritic spine. Functionally, calmodulin-binding scaffolding protein which is the center of the striatin-interacting phosphatase and kinase (STRIPAK) complexes. STRIPAK complexes have critical roles in protein (de)phosphorylation and are regulators of multiple signaling pathways including Hippo, MAPK, nuclear receptor and cytoskeleton remodeling. Different types of STRIPAK complexes are involved in a variety of biological processes such as cell growth, differentiation, apoptosis, metabolism and immune regulation. The polypeptide is Striatin (Strn) (Rattus norvegicus (Rat)).